We begin with the raw amino-acid sequence, 259 residues long: Isoepoxydon dehydrogenase patN (259 aa).

NADP(+) contacts are provided by Asp-69, Asn-96, and Lys-125. Active-site proton donor residues include Ser-143 and Ser-144. 3 residues coordinate NADP(+): Tyr-158, Lys-162, and Val-191. Catalysis depends on Tyr-158, which acts as the Proton acceptor. The active-site Lowers pKa of active site Tyr is the Lys-162.

The protein belongs to the short-chain dehydrogenases/reductases (SDR) family.

It localises to the cytoplasm. Its subcellular location is the cytosol. It catalyses the reaction isoepoxydon + NADP(+) = phyllostine + NADPH + H(+). It functions in the pathway mycotoxin biosynthesis; patulin biosynthesis. Functionally, isoepoxydon dehydrogenase; part of the gene cluster that mediates the biosynthesis of patulin, an acetate-derived tetraketide mycotoxin produced by several fungal species that shows antimicrobial properties against several bacteria. PatN catalyzes the conversion of isoepoxydon into phyllostine. The pathway begins with the synthesis of 6-methylsalicylic acid by the polyketide synthase (PKS) patK via condensation of acetate and malonate units. The 6-methylsalicylic acid decarboxylase patG then catalyzes the decarboxylation of 6-methylsalicylic acid to yield m-cresol (also known as 3-methylphenol). These first reactions occur in the cytosol. The intermediate m-cresol is then transported into the endoplasmic reticulum where the cytochrome P450 monooxygenase patH converts it to m-hydroxybenzyl alcohol, which is further converted to gentisyl alcohol by the cytochrome P450 monooxygenase patI. The oxidoreductases patJ and patO further convert gentisyl alcohol to isoepoxydon in the vacuole. PatN catalyzes then the transformation of isoepoxydon into phyllostine. The cluster protein patF is responsible for the conversion from phyllostine to neopatulin whereas the alcohol dehydrogenase patD converts neopatulin to E-ascladiol. The steps between isoepoxydon and E-ascladiol occur in the cytosol, and E-ascladiol is probably secreted to the extracellular space by one of the cluster-specific transporters patC or patM. Finally, the secreted patulin synthase patE catalyzes the conversion of E-ascladiol to patulin. In Penicillium expansum (Blue mold rot fungus), this protein is Isoepoxydon dehydrogenase patN.